Here is a 326-residue protein sequence, read N- to C-terminus: UDP-N-acetylglucosamine transporter (326 aa).

8 helical membrane-spanning segments follow: residues Asn-4–Met-24, Leu-38–Val-58, Leu-136–Trp-156, Phe-174–Phe-194, Leu-212–Val-232, Leu-244–Lys-264, Ile-269–Trp-289, and Phe-293–Tyr-313.

The protein belongs to the nucleotide-sugar transporter family. SLC35A subfamily. Interacts with SLC35A2; the interaction is reduced in the presence of SLC35A4. Found in a complex with SLC35A2 and SLC35A4. Interacts with MGAT4B. In terms of processing, O-Glcnacylation regulates the stability of SLC35A3 and the specific complex formation with MGAT4B.

The protein localises to the golgi apparatus membrane. The enzyme catalyses UMP(out) + UDP-N-acetyl-alpha-D-glucosamine(in) = UMP(in) + UDP-N-acetyl-alpha-D-glucosamine(out). Transports diphosphate-N-acetylglucosamine (UDP-GlcNAc) from the cytosol into the lumen of the Golgi apparatus, functioning as an antiporter that exchanges UDP-N-acetyl-alpha-D-glucosamine for UMP. May supply UDP-GlcNAc as substrate for Golgi-resident glycosyltransferases that generate highly branched, multiantennary complex N-glycans and keratan sulfate. However, the exact role of SLC35A3 still needs to be elucidated, it could be a member of a catalytically more efficient multiprotein complex rather than function independently as a single transporter. The sequence is that of UDP-N-acetylglucosamine transporter (SLC35A3) from Bos taurus (Bovine).